We begin with the raw amino-acid sequence, 419 residues long: UDP-N-acetylglucosamine 1-carboxyvinyltransferase (419 aa).

22–23 (KN) lines the phosphoenolpyruvate pocket. Arg93 contributes to the UDP-N-acetyl-alpha-D-glucosamine binding site. Cys117 serves as the catalytic Proton donor. Position 117 is a 2-(S-cysteinyl)pyruvic acid O-phosphothioketal (Cys117). Asp306 and Ile328 together coordinate UDP-N-acetyl-alpha-D-glucosamine.

Belongs to the EPSP synthase family. MurA subfamily.

The protein localises to the cytoplasm. It catalyses the reaction phosphoenolpyruvate + UDP-N-acetyl-alpha-D-glucosamine = UDP-N-acetyl-3-O-(1-carboxyvinyl)-alpha-D-glucosamine + phosphate. Its pathway is cell wall biogenesis; peptidoglycan biosynthesis. Cell wall formation. Adds enolpyruvyl to UDP-N-acetylglucosamine. The protein is UDP-N-acetylglucosamine 1-carboxyvinyltransferase of Magnetococcus marinus (strain ATCC BAA-1437 / JCM 17883 / MC-1).